Reading from the N-terminus, the 321-residue chain is Small ribosomal subunit protein mS43 (321 aa).

A mitochondrion-targeting transit peptide spans 1–13; that stretch reads MLRFTGARAIRKY.

Belongs to the mitochondrion-specific ribosomal protein mS43 family. In terms of assembly, component of the mitochondrial small ribosomal subunit (mt-SSU). Mature yeast 74S mitochondrial ribosomes consist of a small (37S) and a large (54S) subunit. The 37S small subunit contains a 15S ribosomal RNA (15S mt-rRNA) and 34 different proteins. The 54S large subunit contains a 21S rRNA (21S mt-rRNA) and 46 different proteins. mS43 forms a heterodimer with mS42, building a large protuberance adjacent to the mRNA channel exit in the mt-SSU body.

Its subcellular location is the mitochondrion. Functionally, component of the mitochondrial ribosome (mitoribosome), a dedicated translation machinery responsible for the synthesis of mitochondrial genome-encoded proteins, including at least some of the essential transmembrane subunits of the mitochondrial respiratory chain. The mitoribosomes are attached to the mitochondrial inner membrane and translation products are cotranslationally integrated into the membrane. This chain is Small ribosomal subunit protein mS43 (MRP1), found in Saccharomyces cerevisiae (strain ATCC 204508 / S288c) (Baker's yeast).